The sequence spans 837 residues: Phenylalanine--tRNA ligase beta subunit (837 aa).

The region spanning 39–149 is the tRNA-binding domain; that stretch reads SASLEGIVTG…EMNIAIPKIG (111 aa). The 106-residue stretch at 415 to 520 folds into the B5 domain; the sequence is IEEQLLLLRR…RLIGYDRFDS (106 aa). Mg(2+) contacts are provided by Asp498, Asp504, Glu507, and Glu508. One can recognise an FDX-ACB domain in the interval 743–836; sequence PTVPSMERDI…LKVEFSAELR (94 aa).

The protein belongs to the phenylalanyl-tRNA synthetase beta subunit family. Type 1 subfamily. Tetramer of two alpha and two beta subunits. It depends on Mg(2+) as a cofactor.

Its subcellular location is the cytoplasm. It carries out the reaction tRNA(Phe) + L-phenylalanine + ATP = L-phenylalanyl-tRNA(Phe) + AMP + diphosphate + H(+). The chain is Phenylalanine--tRNA ligase beta subunit from Prochlorococcus marinus (strain SARG / CCMP1375 / SS120).